We begin with the raw amino-acid sequence, 209 residues long: Yop proteins translocation protein K (209 aa).

Belongs to an operon involved in the translocation of Yop proteins across the bacterial membranes or in the specific control of this function. This chain is Yop proteins translocation protein K (yscK), found in Yersinia enterocolitica.